The sequence spans 140 residues: Sex-regulated protein janus-B (140 aa).

Arg42 contributes to the substrate binding site. Catalysis depends on His69, which acts as the Proton acceptor. 110-112 contributes to the substrate binding site; the sequence is SRT.

Belongs to the janus family.

Its function is as follows. JanA and janB regulate somatic sex differentiation. In Drosophila simulans (Fruit fly), this protein is Sex-regulated protein janus-B (janB).